A 155-amino-acid chain; its full sequence is Small ribosomal subunit protein uS7 (155 aa).

It belongs to the universal ribosomal protein uS7 family. Part of the 30S ribosomal subunit. Contacts proteins S9 and S11.

One of the primary rRNA binding proteins, it binds directly to 16S rRNA where it nucleates assembly of the head domain of the 30S subunit. Is located at the subunit interface close to the decoding center, probably blocks exit of the E-site tRNA. The protein is Small ribosomal subunit protein uS7 of Kosmotoga olearia (strain ATCC BAA-1733 / DSM 21960 / TBF 19.5.1).